We begin with the raw amino-acid sequence, 735 residues long: Phosphoribosylformylglycinamidine synthase subunit PurL (735 aa).

Histidine 50 is an active-site residue. The ATP site is built by tyrosine 53 and lysine 92. Glutamate 94 lines the Mg(2+) pocket. Substrate-binding positions include 95-98 (SHNH) and arginine 117. Histidine 96 functions as the Proton acceptor in the catalytic mechanism. Residue aspartate 118 participates in Mg(2+) binding. A substrate-binding site is contributed by glutamine 241. Position 269 (aspartate 269) interacts with Mg(2+). Substrate is bound at residue 313-315 (ESQ). ATP contacts are provided by aspartate 495 and glycine 532. Asparagine 533 contacts Mg(2+). Substrate is bound at residue serine 535.

This sequence belongs to the FGAMS family. In terms of assembly, monomer. Part of the FGAM synthase complex composed of 1 PurL, 1 PurQ and 2 PurS subunits.

It localises to the cytoplasm. It catalyses the reaction N(2)-formyl-N(1)-(5-phospho-beta-D-ribosyl)glycinamide + L-glutamine + ATP + H2O = 2-formamido-N(1)-(5-O-phospho-beta-D-ribosyl)acetamidine + L-glutamate + ADP + phosphate + H(+). It functions in the pathway purine metabolism; IMP biosynthesis via de novo pathway; 5-amino-1-(5-phospho-D-ribosyl)imidazole from N(2)-formyl-N(1)-(5-phospho-D-ribosyl)glycinamide: step 1/2. In terms of biological role, part of the phosphoribosylformylglycinamidine synthase complex involved in the purines biosynthetic pathway. Catalyzes the ATP-dependent conversion of formylglycinamide ribonucleotide (FGAR) and glutamine to yield formylglycinamidine ribonucleotide (FGAM) and glutamate. The FGAM synthase complex is composed of three subunits. PurQ produces an ammonia molecule by converting glutamine to glutamate. PurL transfers the ammonia molecule to FGAR to form FGAM in an ATP-dependent manner. PurS interacts with PurQ and PurL and is thought to assist in the transfer of the ammonia molecule from PurQ to PurL. This is Phosphoribosylformylglycinamidine synthase subunit PurL from Bartonella henselae (strain ATCC 49882 / DSM 28221 / CCUG 30454 / Houston 1) (Rochalimaea henselae).